The chain runs to 881 residues: Band 4.1-like protein 1 (881 aa).

At Met1 the chain carries N-acetylmethionine. Positions 1–88 are disordered; sequence MTTETGPDSE…TPSKAQKSPQ (88 aa). Positions 17–35 are enriched in low complexity; sequence EAPQQPEAAAAVTTPVTPA. The residue at position 30 (Thr30) is a Phosphothreonine. Basic and acidic residues predominate over residues 38–50; that stretch reads GHPEANSNEKHPS. Ser75 carries the phosphoserine modification. Polar residues predominate over residues 76-87; that stretch reads ERTTPSKAQKSP. Thr79 is subject to Phosphothreonine. The FERM domain maps to 97-378; that stretch reads AICRVTLLDA…EHHTFFRLVS (282 aa). The residue at position 343 (Tyr343) is a Phosphotyrosine. Ser378, Ser430, and Ser437 each carry phosphoserine. Residues 428 to 501 form a disordered region; it reads SRSLDGAEFS…HKQEFLDKPE (74 aa). A compositionally biased stretch (basic and acidic residues) spans 444-457; that stretch reads ENHDAGPDGDKRDE. Ser461 and Ser466 each carry phosphoserine. Residues 466–501 are compositionally biased toward basic and acidic residues; it reads SEAEEGEVRTPTKIKELKPEQETTPRHKQEFLDKPE. At Thr475 the chain carries Phosphothreonine. The segment at 483 to 541 is spectrin--actin-binding; it reads KPEQETTPRHKQEFLDKPEDVLLKHQASINELKRTLKEPNSKLIHRDRDWERERRLPSS. The residue at position 510 (Ser510) is a Phosphoserine. Residues 514 to 538 are compositionally biased toward basic and acidic residues; it reads LKRTLKEPNSKLIHRDRDWERERRL. The segment at 514-596 is disordered; sequence LKRTLKEPNS…QERDTVFLKD (83 aa). Ser540, Ser541, Ser544, and Ser546 each carry phosphoserine. A Phosphothreonine modification is found at Thr550. Basic and acidic residues predominate over residues 550–577; that stretch reads TPEKANERAGLREGSEEKVKPPRPRAPE. 2 positions are modified to phosphoserine: Ser564 and Ser578. At Thr580 the chain carries Phosphothreonine. Phosphoserine occurs at positions 639, 648, 650, 667, 672, 678, and 685. A disordered region spans residues 642–699; sequence ELDRDKSDSDTEGLLFSRDLNKGAPSQDDESGGIEDSPDRGACSTPDMPQFEPVKTET. The residue at position 686 (Thr686) is a Phosphothreonine. 3 positions are modified to phosphoserine: Ser722, Ser784, and Ser870. The interval 746 to 881 is C-terminal (CTD); sequence SITTETISTT…EERDKKPQES (136 aa).

Interacts with AGAP2. Highest expression in brain, lower in heart, kidney, pancreas, placenta, lung and skeletal muscle.

The protein resides in the cytoplasm. It is found in the cytoskeleton. Functionally, may function to confer stability and plasticity to neuronal membrane via multiple interactions, including the spectrin-actin-based cytoskeleton, integral membrane channels and membrane-associated guanylate kinases. This is Band 4.1-like protein 1 from Homo sapiens (Human).